The sequence spans 308 residues: Methionyl-tRNA formyltransferase (308 aa).

A (6S)-5,6,7,8-tetrahydrofolate-binding site is contributed by 110-113 (SLLP).

The protein belongs to the Fmt family.

It carries out the reaction L-methionyl-tRNA(fMet) + (6R)-10-formyltetrahydrofolate = N-formyl-L-methionyl-tRNA(fMet) + (6S)-5,6,7,8-tetrahydrofolate + H(+). In terms of biological role, attaches a formyl group to the free amino group of methionyl-tRNA(fMet). The formyl group appears to play a dual role in the initiator identity of N-formylmethionyl-tRNA by promoting its recognition by IF2 and preventing the misappropriation of this tRNA by the elongation apparatus. This Neisseria meningitidis serogroup B (strain ATCC BAA-335 / MC58) protein is Methionyl-tRNA formyltransferase.